Consider the following 389-residue polypeptide: Nucleic acid dioxygenase ALKBH1 (389 aa).

The tract at residues 1–127 is interaction with DNAJB6; the sequence is MGKMAAAVAS…CLKLYSQKPN (127 aa). The tract at residues 86–389 is tRNA-binding; sequence SKWRAYGLEG…VKRKRLNPNS (304 aa). Residues Trp144 and 175 to 177 contribute to the substrate site; that span reads YHY. Residues 213-347 form the Fe2OG dioxygenase domain; the sequence is QAEAGILNYY…RVNMTVRQVL (135 aa). Residue 220–222 coordinates 2-oxoglutarate; that stretch reads NYY. The Fe cation site is built by His231, Asp233, and His287. Asp233 contributes to the substrate binding site. 338 to 344 is a 2-oxoglutarate binding site; the sequence is RVNMTVR.

In terms of assembly, monomer. Interacts with DNAJB6. Fe(2+) serves as cofactor. As to expression, in adult organs, highly expressed in testis, eye, brain and kidney.

Its subcellular location is the nucleus. The enzyme catalyses an N(6)-methyl-2'-deoxyadenosine in DNA + 2-oxoglutarate + O2 = a 2'-deoxyadenosine in DNA + formaldehyde + succinate + CO2. The catalysed reaction is 2'-deoxyribonucleotide-(2'-deoxyribose 5'-phosphate)-2'-deoxyribonucleotide-DNA = a 3'-end 2'-deoxyribonucleotide-(2,3-dehydro-2,3-deoxyribose 5'-phosphate)-DNA + a 5'-end 5'-phospho-2'-deoxyribonucleoside-DNA + H(+). It catalyses the reaction a methylated nucleobase within DNA + 2-oxoglutarate + O2 = a nucleobase within DNA + formaldehyde + succinate + CO2. It carries out the reaction an N(1)-methyladenosine in tRNA + 2-oxoglutarate + O2 = an adenosine in tRNA + formaldehyde + succinate + CO2. The enzyme catalyses 5-methylcytidine(34) in mitochondrial tRNA(Met) + 2 2-oxoglutarate + 2 O2 = 5-formylcytidine(34) in mitochondrial tRNA(Met) + 2 succinate + 2 CO2 + H2O. The catalysed reaction is an N(3)-methylcytidine in mRNA + 2-oxoglutarate + O2 = a cytidine in mRNA + formaldehyde + succinate + CO2. It catalyses the reaction N(1)-methyladenosine(58) in tRNA + 2-oxoglutarate + O2 = adenosine(58) in tRNA + formaldehyde + succinate + CO2. Dioxygenase that acts on nucleic acids, such as DNA and tRNA. Requires molecular oxygen, alpha-ketoglutarate and iron. A number of activities have been described for this dioxygenase, but recent results suggest that it mainly acts on tRNAs and mediates their demethylation or oxidation depending on the context and subcellular compartment. Mainly acts as a tRNA demethylase by removing N(1)-methyladenine from various tRNAs, with a preference for N(1)-methyladenine at position 58 (m1A58) present on a stem loop structure of tRNAs. Acts as a regulator of translation initiation and elongation in response to glucose deprivation: regulates both translation initiation, by mediating demethylation of tRNA(Met), and translation elongation, N(1)-methyladenine-containing tRNAs being preferentially recruited to polysomes to promote translation elongation. In mitochondrion, specifically interacts with mt-tRNA(Met) and mediates oxidation of mt-tRNA(Met) methylated at cytosine(34) to form 5-formylcytosine (f(5)c) at this position. mt-tRNA(Met) containing the f(5)c modification at the wobble position enables recognition of the AUA codon in addition to the AUG codon, expanding codon recognition in mitochondrial translation. Specifically demethylates DNA methylated on the 6th position of adenine (N(6)-methyladenosine) DNA. N(6)-methyladenosine (m6A) DNA is present at some L1 elements in embryonic stem cells and probably promotes their silencing. Demethylates mRNAs containing N(3)-methylcytidine modification. Also able to repair alkylated single-stranded DNA by oxidative demethylation, but with low activity. Also has DNA lyase activity and introduces double-stranded breaks at abasic sites: cleaves both single-stranded DNA and double-stranded DNA at abasic sites, with the greatest activity towards double-stranded DNA with two abasic sites. DNA lyase activity does not require alpha-ketoglutarate and iron and leads to the formation of an irreversible covalent protein-DNA adduct with the 5' DNA product. DNA lyase activity is not required during base excision repair and class switch recombination of the immunoglobulin heavy chain during B lymphocyte activation. May play a role in placental trophoblast lineage differentiation. This is Nucleic acid dioxygenase ALKBH1 from Mus musculus (Mouse).